The primary structure comprises 361 residues: Replication-associated protein (361 aa).

Residues 8 to 116 form the CRESS-DNA virus Rep endonuclease domain; the sequence is RVQSKNYFLT…DGDTIEWGDF (109 aa). The short motif at 15–18 is the RCR-1 element; the sequence is FLTY. Residues Glu-49, His-57, and His-59 each contribute to the a divalent metal cation site. Positions 57–59 match the RCR-2 motif; that stretch reads HLH. Tyr-103 acts as the For DNA cleavage activity in catalysis. The short motif at 103–106 is the RCR-3 element; the sequence is YIDK. Residue Asp-107 participates in a divalent metal cation binding. Residues 143-153 form a binding to RBR1 region; it reads VQSALAVLREE. The interval 156–176 is oligomerization; that stretch reads KDFVLQNHNIRSNLERIFAKA. 222-229 serves as a coordination point for ATP; it reads GDSRTGKT.

It belongs to the geminiviridae Rep protein family. In terms of assembly, homooligomer. Interacts with the replication enhancer. protein (REn). Interacts with host retinoblastoma-related protein 1 (RBR1), and may thereby induce the transcription of host replicative enzymes even if the cell is not dividing anymore. Interacts with host PCNA. Interacts with host SCE1 protein. The cofactor is Mg(2+). Mn(2+) serves as cofactor.

Its subcellular location is the host nucleus. Functionally, essential for the replication of viral ssDNA. The closed circular ssDNA genome is first converted to a superhelical dsDNA. Rep binds a specific region at the genome origin of replication. It introduces an endonucleolytic nick within the conserved sequence 5'-TAATATTAC-3' in the intergenic region of the genome present in all geminiviruses, thereby initiating the rolling circle replication (RCR). Following cleavage, binds covalently to the 5'-phosphate of DNA as a tyrosyl ester. The cleavage gives rise to a free 3'-OH that serves as a primer for the cellular DNA polymerase. The polymerase synthesizes the (+) strand DNA by rolling circle mechanism. After one round of replication, a Rep-catalyzed nucleotidyl transfer reaction releases a circular single-stranded virus genome, thereby terminating the replication. Displays origin-specific DNA cleavage, nucleotidyl transferase, ATPase and helicase activities. In Nicotiana tabacum (Common tobacco), this protein is Replication-associated protein.